We begin with the raw amino-acid sequence, 312 residues long: L-lactate dehydrogenase (312 aa).

NAD(+)-binding residues include V14, D35, and Y66. Residues Q83, R90, and 122 to 125 (NPVD) each bind substrate. Residues 120 to 122 (ASN) and S145 each bind NAD(+). Residue 150–153 (DSAR) coordinates substrate. H177 functions as the Proton acceptor in the catalytic mechanism. Y220 carries the phosphotyrosine modification. T229 lines the substrate pocket.

Belongs to the LDH/MDH superfamily. LDH family. As to quaternary structure, homotetramer.

It localises to the cytoplasm. It catalyses the reaction (S)-lactate + NAD(+) = pyruvate + NADH + H(+). It functions in the pathway fermentation; pyruvate fermentation to lactate; (S)-lactate from pyruvate: step 1/1. Its function is as follows. Catalyzes the conversion of lactate to pyruvate. The polypeptide is L-lactate dehydrogenase (Mycoplasma pneumoniae (strain ATCC 29342 / M129 / Subtype 1) (Mycoplasmoides pneumoniae)).